We begin with the raw amino-acid sequence, 368 residues long: Core histone macro-H2A.1 (368 aa).

The Histone H2A domain maps to 2-117 (SSRGGKKKST…NIHPELLAKK (116 aa)). 2 positions are modified to N6-lactoyllysine; alternate: Lys-7 and Lys-9. N6-methyllysine is present on Lys-18. The residue at position 116 (Lys-116) is an N6-acetyllysine; alternate. A Glycyl lysine isopeptide (Lys-Gly) (interchain with G-Cter in ubiquitin); alternate cross-link involves residue Lys-116. Lys-117 participates in a covalent cross-link: Glycyl lysine isopeptide (Lys-Gly) (interchain with G-Cter in ubiquitin). Residue Lys-123 is modified to N6-acetyllysine; alternate. Lys-123 bears the N6,N6-dimethyllysine; alternate mark. A Glycyl lysine isopeptide (Lys-Gly) (interchain with G-Cter in SUMO2); alternate cross-link involves residue Lys-123. The interval 128–179 (ITPPPAKKAKSPSQKKPVAKKTGGKKGARKSKKQGEVSKAASADSTTEGAPT) is disordered. Thr-129 is subject to Phosphothreonine. Over residues 144–159 (PVAKKTGGKKGARKSK) the composition is skewed to basic residues. Lys-166 is covalently cross-linked (Glycyl lysine isopeptide (Lys-Gly) (interchain with G-Cter in SUMO2)). Phosphoserine occurs at positions 169 and 172. The Macro domain maps to 183 to 366 (TVLSTKSLFL…IYVQEMAKLD (184 aa)). A Glycyl lysine isopeptide (Lys-Gly) (interchain with G-Cter in SUMO2) cross-link involves residue Lys-188. A glycoprotein contacts are provided by Asp-202, Ile-203, Val-225, Ser-274, Gly-311, Ser-312, Gly-313, and Asn-315. Residue Lys-319 forms a Glycyl lysine isopeptide (Lys-Gly) (interchain with G-Cter in SUMO2) linkage.

It belongs to the histone H2A family. As to quaternary structure, the nucleosome is a histone octamer containing two molecules each of H2A, H2B, H3 and H4 assembled in one H3-H4 heterotetramer and two H2A-H2B heterodimers. Interacts with HDAC1 and HDAC2. Interacts with SPOP. Part of a complex consisting of MACROH2A1, CUL3 and SPOP. In terms of assembly, interacts with PARP1. Post-translationally, monoubiquitinated at either Lys-116 or Lys-117. May also be polyubiquitinated. Ubiquitination is mediated by the CUL3/SPOP E3 complex and does not promote proteasomal degradation. Instead, it is required for enrichment in inactive X chromosome chromatin. Present only in liver and brain (at protein level). As to expression, present in brain, thymus, testis, liver and kidney (at protein level).

Its subcellular location is the nucleus. The protein localises to the chromosome. Its function is as follows. Variant histone H2A which replaces conventional H2A in a subset of nucleosomes where it represses transcription. Nucleosomes wrap and compact DNA into chromatin, limiting DNA accessibility to the cellular machineries which require DNA as a template. Histones thereby play a central role in transcription regulation, DNA repair, DNA replication and chromosomal stability. DNA accessibility is regulated via a complex set of post-translational modifications of histones, also called histone code, and nucleosome remodeling. Involved in stable X chromosome inactivation. Inhibits the binding of transcription factors, including NF-kappa-B, and interferes with the activity of remodeling SWI/SNF complexes. Inhibits histone acetylation by EP300 and recruits class I HDACs, which induces a hypoacetylated state of chromatin. In terms of biological role, isoform that specifically binds poly-ADP-ribose and O-acetyl-ADP-ribose and plays a key role in NAD(+) metabolism. Able to bind to the ends of poly-ADP-ribose chains created by PARP1 and cap them. This prevents PARP1 from further addition of ADP-ribose and thus limits the consumption of nuclear NAD(+), allowing the cell to maintain proper NAD(+) levels in both the nucleus and the mitochondria to promote proper mitochondrial respiration. Increases the expression of genes involved in redox metabolism, including SOD3. Functionally, in contrast to isoform 1, does not bind poly-ADP-ribose. Represses SOD3 gene expression. The polypeptide is Core histone macro-H2A.1 (Rattus norvegicus (Rat)).